The sequence spans 446 residues: Histidine--tRNA ligase (446 aa).

The protein belongs to the class-II aminoacyl-tRNA synthetase family. As to quaternary structure, homodimer.

It localises to the cytoplasm. It catalyses the reaction tRNA(His) + L-histidine + ATP = L-histidyl-tRNA(His) + AMP + diphosphate + H(+). The chain is Histidine--tRNA ligase from Paraburkholderia phymatum (strain DSM 17167 / CIP 108236 / LMG 21445 / STM815) (Burkholderia phymatum).